A 973-amino-acid polypeptide reads, in one-letter code: Ras-related protein Rab-44 (973 aa).

Residues 1–21 (MEKGKGVSRKGRKLASSRRRQ) show a composition bias toward basic residues. Residues 1–42 (MEKGKGVSRKGRKLASSRRRQAREPADGQDAPVAAEAESWPS) are disordered. Positions 77–111 (GGEEPQMIFDWVDVESRGHLSLEEFSSGLKNVFGS) constitute an EF-hand domain. Residues 112–140 (SPGTHRLRTKRSLPSQRESVTSTLPVPEE) are disordered. Over residues 123 to 135 (SLPSQRESVTSTL) the composition is skewed to polar residues. The stretch at 219-310 (LYKVRQLYEE…ERDLAGQLEE (92 aa)) forms a coiled coil. Disordered stretches follow at residues 319-368 (RGHL…FGNN), 421-481 (FSQE…GSFL), 493-708 (GTVE…GLAV), and 724-779 (EAQP…GKPQ). The span at 428 to 440 (DPDPGPRGSPEVP) shows a compositional bias: pro residues. Positions 445–457 (KDGKGVEDPKGQD) are enriched in basic and acidic residues. Low complexity predominate over residues 513–524 (GLSSSPQSPAGS). Basic and acidic residues-rich tracts occupy residues 548–559 (SLEREVMAEDLK), 598–608 (HLARQESHAKG), and 654–663 (SESHGLEARS). Residues 665-680 (ESPQQDDPLPNTSQPP) are compositionally biased toward polar residues. The span at 750-766 (AESRPEDPRTDLQEAER) shows a compositional bias: basic and acidic residues. Residues 792–799 (GDSNVGKT), 840–844 (DTAGQ), and 898–901 (NKMD) contribute to the GTP site. 2 S-geranylgeranyl cysteine lipidation sites follow: cysteine 971 and cysteine 972.

The protein belongs to the small GTPase superfamily. Rab family.

It localises to the cell membrane. The sequence is that of Ras-related protein Rab-44 (Rab44) from Mus musculus (Mouse).